A 177-amino-acid chain; its full sequence is Large ribosomal subunit protein uL6 (177 aa).

This sequence belongs to the universal ribosomal protein uL6 family. Part of the 50S ribosomal subunit.

In terms of biological role, this protein binds to the 23S rRNA, and is important in its secondary structure. It is located near the subunit interface in the base of the L7/L12 stalk, and near the tRNA binding site of the peptidyltransferase center. In Haemophilus influenzae (strain 86-028NP), this protein is Large ribosomal subunit protein uL6.